Reading from the N-terminus, the 65-residue chain is Large ribosomal subunit protein bL35 (65 aa).

Belongs to the bacterial ribosomal protein bL35 family.

The polypeptide is Large ribosomal subunit protein bL35 (Borrelia duttonii (strain Ly)).